The following is a 222-amino-acid chain: RING finger protein 141 (222 aa).

An RING-type zinc finger spans residues 147–184; that stretch reads CCICMDGKADLILPCAHSFCQKCIDKWSGQSRNCPVCR.

This chain is RING finger protein 141 (rnf141), found in Danio rerio (Zebrafish).